The sequence spans 124 residues: Iron-sulfur cluster insertion protein ErpA (124 aa).

Residues cysteine 52, cysteine 116, and cysteine 118 each contribute to the iron-sulfur cluster site.

It belongs to the HesB/IscA family. As to quaternary structure, homodimer. Requires iron-sulfur cluster as cofactor.

In terms of biological role, required for insertion of 4Fe-4S clusters for at least IspG. The polypeptide is Iron-sulfur cluster insertion protein ErpA (Acidithiobacillus ferrooxidans (strain ATCC 23270 / DSM 14882 / CIP 104768 / NCIMB 8455) (Ferrobacillus ferrooxidans (strain ATCC 23270))).